A 218-amino-acid chain; its full sequence is Adenylate kinase (218 aa).

10–15 (GAGKGT) provides a ligand contact to ATP. Positions 30 to 59 (STGDMIRETIKSGSALGQELKKVLDAGELV) are NMP. Residues Thr-31, Arg-36, 57–59 (ELV), and Gln-92 each bind AMP. The tract at residues 122-159 (GRRIHPASGRTYHTKFNPPKVADKDDVTGEPLITRTDD) is LID. Residues Arg-123 and 132-133 (TY) contribute to the ATP site. Residues Arg-156 and Arg-167 each coordinate AMP. Gln-202 lines the ATP pocket.

It belongs to the adenylate kinase family. As to quaternary structure, monomer.

Its subcellular location is the cytoplasm. It carries out the reaction AMP + ATP = 2 ADP. Its pathway is purine metabolism; AMP biosynthesis via salvage pathway; AMP from ADP: step 1/1. Catalyzes the reversible transfer of the terminal phosphate group between ATP and AMP. Plays an important role in cellular energy homeostasis and in adenine nucleotide metabolism. The chain is Adenylate kinase from Francisella tularensis subsp. tularensis (strain FSC 198).